The primary structure comprises 223 residues: Homeobox protein egl-5 (223 aa).

Residues 1–25 (MNTSTSAFDFGSSTASSAATSTTSS) are compositionally biased toward low complexity. Disordered stretches follow at residues 1 to 58 (MNTS…STEA) and 168 to 191 (KKEK…PPKG). Positions 112–171 (SKKGRQTYQRYQTSVLEAKFQQSSYVSKKQREELRLQTQLTDRQIKIWFQNRRMKAKKEK) form a DNA-binding region, homeobox.

Belongs to the Abd-B homeobox family. As to quaternary structure, interacts with the TCF transcription factor pop-1.

It localises to the nucleus. Its function is as follows. Involved in control of cell fate and pattern formation along the anterior-posterior axis, acting mainly in the tail. Required during embryonic and postembryonic development. Essential for the determination of specific neurons, including the PLM touch neurons. Plays a role in neural fate specification in the hermaphrodite-specific neuron (HSN)/PHB neuron lineage, acting in concert with T-box protein tbx-2 and the asymmetric cell division protein ham-1. Required for male gonadal fate determination, acting in parallel with a WNT/beta-catenin pathway, perhaps by recruiting pop-1 to male-specific gonadal target genes. Involved in development of the hermaphrodite hindgut, and for the response to rectal infection by the coryneform bacterium M.nematophilum. The protein is Homeobox protein egl-5 of Caenorhabditis elegans.